Reading from the N-terminus, the 258-residue chain is Small ribosomal subunit protein uS2 (258 aa).

The segment at 226–258 (QGVSNEEVAAEQNIDLDEKEKSEETEATEATEE) is disordered.

The protein belongs to the universal ribosomal protein uS2 family.

This Staphylococcus aureus (strain COL) protein is Small ribosomal subunit protein uS2.